The following is a 470-amino-acid chain: ATP synthase subunit beta (470 aa).

Position 156–163 (156–163) interacts with ATP; it reads GGAGVGKT.

Belongs to the ATPase alpha/beta chains family. In terms of assembly, F-type ATPases have 2 components, CF(1) - the catalytic core - and CF(0) - the membrane proton channel. CF(1) has five subunits: alpha(3), beta(3), gamma(1), delta(1), epsilon(1). CF(0) has three main subunits: a(1), b(2) and c(9-12). The alpha and beta chains form an alternating ring which encloses part of the gamma chain. CF(1) is attached to CF(0) by a central stalk formed by the gamma and epsilon chains, while a peripheral stalk is formed by the delta and b chains.

The protein resides in the cell inner membrane. It carries out the reaction ATP + H2O + 4 H(+)(in) = ADP + phosphate + 5 H(+)(out). In terms of biological role, produces ATP from ADP in the presence of a proton gradient across the membrane. The catalytic sites are hosted primarily by the beta subunits. The chain is ATP synthase subunit beta from Nitratidesulfovibrio vulgaris (strain ATCC 29579 / DSM 644 / CCUG 34227 / NCIMB 8303 / VKM B-1760 / Hildenborough) (Desulfovibrio vulgaris).